Here is a 507-residue protein sequence, read N- to C-terminus: Serine hydroxymethyltransferase (507 aa).

Residue Lys-283 is modified to N6-(pyridoxal phosphate)lysine.

Belongs to the SHMT family. Homotetramer. The cofactor is pyridoxal 5'-phosphate.

It carries out the reaction (6R)-5,10-methylene-5,6,7,8-tetrahydrofolate + glycine + H2O = (6S)-5,6,7,8-tetrahydrofolate + L-serine. It participates in one-carbon metabolism; tetrahydrofolate interconversion. In terms of biological role, interconversion of serine and glycine. In Caenorhabditis elegans, this protein is Serine hydroxymethyltransferase (mel-32).